The following is a 336-amino-acid chain: L-rhamnono-gamma-lactonase (336 aa).

This sequence belongs to the metallo-dependent hydrolases superfamily. The cofactor is a divalent metal cation.

The catalysed reaction is L-rhamnono-1,4-lactone + H2O = L-rhamnonate + H(+). Inhibited by Zn(2+), Fe(2+) and Cu(2+), but not by EDTA. Its function is as follows. Hydrolase with high substrate specificity for L-rhamnono-1,4-lactone. Catalyzes the second step in an alternative pathway for rhamnose utilization that does not involve phosphorylated intermediates. In Scheffersomyces stipitis (strain ATCC 58785 / CBS 6054 / NBRC 10063 / NRRL Y-11545) (Yeast), this protein is L-rhamnono-gamma-lactonase (LRA2).